The chain runs to 207 residues: MAQGTLYIVSAPSGAGKSSLIQALLKTQPLYDTQVSVSHTTRAPRPGEVHGEHYFFVNHDEFKTMIGREAFLEHAEVFGNYYGTSRETIEQVLATGVDVFLDIDWQGAQQIREKMPQARSIFILPPSKIELDRRLRGRGQDSEEVIAKRMAQAVAEMSHYAEYDYLIVNDDFDTALSDLKTIIRAERLRMSRQKQRHNALISKLLAD.

A Guanylate kinase-like domain is found at 4–184 (GTLYIVSAPS…ALSDLKTIIR (181 aa)). 11–18 (APSGAGKS) is a binding site for ATP.

This sequence belongs to the guanylate kinase family.

It localises to the cytoplasm. The enzyme catalyses GMP + ATP = GDP + ADP. Functionally, essential for recycling GMP and indirectly, cGMP. The sequence is that of Guanylate kinase (gmk) from Salmonella typhimurium (strain LT2 / SGSC1412 / ATCC 700720).